The primary structure comprises 242 residues: Alpha-aspartyl dipeptidase (242 aa).

Catalysis depends on charge relay system residues Ser125, Asp140, and His162.

It belongs to the peptidase S51 family.

Its subcellular location is the cytoplasm. It carries out the reaction Dipeptidase E catalyzes the hydrolysis of dipeptides Asp-|-Xaa. It does not act on peptides with N-terminal Glu, Asn or Gln, nor does it cleave isoaspartyl peptides.. Functionally, hydrolyzes dipeptides containing N-terminal aspartate residues. The polypeptide is Alpha-aspartyl dipeptidase (aad-a) (Xenopus laevis (African clawed frog)).